The chain runs to 182 residues: NADH-quinone oxidoreductase subunit B (182 aa).

4 residues coordinate [4Fe-4S] cluster: C46, C47, C112, and C141.

The protein belongs to the complex I 20 kDa subunit family. In terms of assembly, NDH-1 is composed of 14 different subunits. Subunits NuoB, C, D, E, F, and G constitute the peripheral sector of the complex. Requires [4Fe-4S] cluster as cofactor.

It localises to the cell inner membrane. The enzyme catalyses a quinone + NADH + 5 H(+)(in) = a quinol + NAD(+) + 4 H(+)(out). Its function is as follows. NDH-1 shuttles electrons from NADH, via FMN and iron-sulfur (Fe-S) centers, to quinones in the respiratory chain. The immediate electron acceptor for the enzyme in this species is believed to be a menaquinone. Couples the redox reaction to proton translocation (for every two electrons transferred, four hydrogen ions are translocated across the cytoplasmic membrane), and thus conserves the redox energy in a proton gradient. The sequence is that of NADH-quinone oxidoreductase subunit B from Flavobacterium johnsoniae (strain ATCC 17061 / DSM 2064 / JCM 8514 / BCRC 14874 / CCUG 350202 / NBRC 14942 / NCIMB 11054 / UW101) (Cytophaga johnsonae).